A 324-amino-acid chain; its full sequence is Adenine deaminase (324 aa).

Residues H11, H13, and H189 each contribute to the Zn(2+) site. Residue E192 is the Proton donor of the active site. D270 is a binding site for Zn(2+). D271 is a binding site for substrate.

It belongs to the metallo-dependent hydrolases superfamily. Adenosine and AMP deaminases family. Adenine deaminase type 2 subfamily. Zn(2+) serves as cofactor.

The enzyme catalyses adenine + H2O + H(+) = hypoxanthine + NH4(+). Its function is as follows. Catalyzes the hydrolytic deamination of adenine to hypoxanthine. Plays an important role in the purine salvage pathway and in nitrogen catabolism. In Sinorhizobium medicae (strain WSM419) (Ensifer medicae), this protein is Adenine deaminase.